The sequence spans 90 residues: MKFLAVLVLLGVSIFLVSAQNPTTAAPADTYPATGPADDEAPDAETTAAATTATTAAPTTATTAASTTARKDIPVLPKWVGDLPNGRVCP.

An N-terminal signal peptide occupies residues 1–20 (MKFLAVLVLLGVSIFLVSAQ). 14 O-linked (GalNAc...) threonine glycosylation sites follow: Thr-23, Thr-24, Thr-30, Thr-34, Thr-46, Thr-47, Thr-51, Thr-52, Thr-54, Thr-55, Thr-59, Thr-60, Thr-62, and Thr-63. Composition is skewed to low complexity over residues 25–36 (AAPADTYPATGP) and 44–68 (AETTAAATTATTAAPTTATTAASTT). The disordered stretch occupies residues 25-68 (AAPADTYPATGPADDEAPDAETTAAATTATTAAPTTATTAASTT). 3 consecutive repeat copies span residues 46–53 (TTAAATTA), 54–61 (TTAAPTTA), and 62–69 (TTAASTTA). Residues 46-69 (TTAAATTATTAAPTTATTAASTTA) form a 3 X 8 AA tandem repeat of T-T-A-A-[APS]-T-T-A region. A glycan (O-linked (GalNAc...) serine) is linked at Ser-66. Thr-67 and Thr-68 each carry an O-linked (GalNAc...) threonine glycan.

Post-translationally, O-glycosylated. Expressed in mammary, salivary glands and prostate. Also detected in lung. Mainly expressed in cancer cell lines of breast origin. Highly expressed in lymph node-positive compared with node-negative tumors. Detected in all lymph node containing metastatic cells.

It is found in the secreted. Its subcellular location is the membrane. Its function is as follows. May play a role as marker for the diagnosis of metastatic breast cancer. This Homo sapiens (Human) protein is Mucin-like protein 1 (MUCL1).